Here is a 655-residue protein sequence, read N- to C-terminus: Acetyl-coenzyme A synthetase (655 aa).

Residues 196–199 (RGGR) and Thr316 each bind CoA. ATP-binding positions include 392 to 394 (GEP), 416 to 421 (DTWWQT), Asp508, and Arg523. Ser531 provides a ligand contact to CoA. Arg534 contacts ATP. Mg(2+) is bound by residues Val545, His547, and Val550. At Lys620 the chain carries N6-acetyllysine.

It belongs to the ATP-dependent AMP-binding enzyme family. Mg(2+) is required as a cofactor. Post-translationally, acetylated. Deacetylation by the SIR2-homolog deacetylase activates the enzyme.

It carries out the reaction acetate + ATP + CoA = acetyl-CoA + AMP + diphosphate. Functionally, catalyzes the conversion of acetate into acetyl-CoA (AcCoA), an essential intermediate at the junction of anabolic and catabolic pathways. AcsA undergoes a two-step reaction. In the first half reaction, AcsA combines acetate with ATP to form acetyl-adenylate (AcAMP) intermediate. In the second half reaction, it can then transfer the acetyl group from AcAMP to the sulfhydryl group of CoA, forming the product AcCoA. This is Acetyl-coenzyme A synthetase from Nitrosomonas europaea (strain ATCC 19718 / CIP 103999 / KCTC 2705 / NBRC 14298).